Consider the following 340-residue polypeptide: Ribosomal RNA large subunit methyltransferase F (340 aa).

Positions 1-36 (MNAPRTPKPARKKPDSATPAKPVEPRKEASLHPRNR) are disordered.

Belongs to the methyltransferase superfamily. METTL16/RlmF family.

The protein localises to the cytoplasm. It catalyses the reaction adenosine(1618) in 23S rRNA + S-adenosyl-L-methionine = N(6)-methyladenosine(1618) in 23S rRNA + S-adenosyl-L-homocysteine + H(+). In terms of biological role, specifically methylates the adenine in position 1618 of 23S rRNA. This is Ribosomal RNA large subunit methyltransferase F from Pseudomonas fluorescens (strain Pf0-1).